The chain runs to 495 residues: Histidine--tRNA ligase (495 aa).

It belongs to the class-II aminoacyl-tRNA synthetase family. In terms of assembly, homodimer.

It localises to the cytoplasm. The enzyme catalyses tRNA(His) + L-histidine + ATP = L-histidyl-tRNA(His) + AMP + diphosphate + H(+). The protein is Histidine--tRNA ligase of Bartonella henselae (strain ATCC 49882 / DSM 28221 / CCUG 30454 / Houston 1) (Rochalimaea henselae).